The primary structure comprises 761 residues: DNA topoisomerase 1 (761 aa).

The Toprim domain occupies 6–143 (TALIICEKPS…KRMRFSSLTK (138 aa)). Positions 12 and 111 each coordinate Mg(2+). Residues 157–569 (DYGLVDAGES…EAEKRLRKIL (413 aa)) form the Topo IA-type catalytic domain. Positions 196–201 (SVGRVQ) are interaction with DNA. Residue tyrosine 315 is the O-(5'-phospho-DNA)-tyrosine intermediate of the active site. 3 C4-type zinc fingers span residues 600 to 626 (CPKC…YPEC), 680 to 706 (CPKC…YPKC), and 721 to 747 (CPKC…YPKC).

Belongs to the type IA topoisomerase family. In terms of assembly, monomer. It depends on Mg(2+) as a cofactor.

It carries out the reaction ATP-independent breakage of single-stranded DNA, followed by passage and rejoining.. In terms of biological role, releases the supercoiling and torsional tension of DNA, which is introduced during the DNA replication and transcription, by transiently cleaving and rejoining one strand of the DNA duplex. Introduces a single-strand break via transesterification at a target site in duplex DNA. The scissile phosphodiester is attacked by the catalytic tyrosine of the enzyme, resulting in the formation of a DNA-(5'-phosphotyrosyl)-enzyme intermediate and the expulsion of a 3'-OH DNA strand. The free DNA strand then undergoes passage around the unbroken strand, thus removing DNA supercoils. Finally, in the religation step, the DNA 3'-OH attacks the covalent intermediate to expel the active-site tyrosine and restore the DNA phosphodiester backbone. The sequence is that of DNA topoisomerase 1 from Methanocaldococcus jannaschii (strain ATCC 43067 / DSM 2661 / JAL-1 / JCM 10045 / NBRC 100440) (Methanococcus jannaschii).